The following is a 445-amino-acid chain: UPF0210 protein SUB1511 (445 aa).

The protein belongs to the UPF0210 family. In terms of assembly, homodimer.

This is UPF0210 protein SUB1511 from Streptococcus uberis (strain ATCC BAA-854 / 0140J).